Reading from the N-terminus, the 192-residue chain is MEKYVVLILSYILGSIPFSLIITRIKGINLREVGSGNIGATNVARTGNKFLAALALFLDSFKGFIAVYIAQQFCDNNDFYIYVSAILAVLGHMFPIWLKFSGGKGVATTLGILIAFNIDITLVFVIIWIIVFLAFRYSSLASLSATSTAVAWSFFFQRNLFLTLLIIGALVFLKHHRNIVNLLQGKEYKFYR.

The next 5 membrane-spanning stretches (helical) occupy residues 5–25, 50–70, 78–98, 112–132, and 153–173; these read VVLILSYILGSIPFSLIITRI, FLAALALFLDSFKGFIAVYIA, DFYIYVSAILAVLGHMFPIWL, ILIAFNIDITLVFVIIWIIVF, and SFFFQRNLFLTLLIIGALVFL.

It belongs to the PlsY family. As to quaternary structure, probably interacts with PlsX.

The protein localises to the cell membrane. It catalyses the reaction an acyl phosphate + sn-glycerol 3-phosphate = a 1-acyl-sn-glycero-3-phosphate + phosphate. It functions in the pathway lipid metabolism; phospholipid metabolism. In terms of biological role, catalyzes the transfer of an acyl group from acyl-phosphate (acyl-PO(4)) to glycerol-3-phosphate (G3P) to form lysophosphatidic acid (LPA). This enzyme utilizes acyl-phosphate as fatty acyl donor, but not acyl-CoA or acyl-ACP. The chain is Glycerol-3-phosphate acyltransferase from Wolbachia pipientis wMel.